The following is a 104-amino-acid chain: DNA-binding transcriptional repressor TubR (104 aa).

2 DNA-binding regions (HTH) span residues Lys-43 to Ile-50 and Lys-54 to Tyr-65.

Homodimer. Binds to tubC DNA, the TubR-DNA complex binds to TubZ.

In terms of biological role, a DNA-binding protein that is part of the type III plasmid partition system used to ensure correct segregation of the pBtoxis plasmid. Cooperatively binds to the centromere-like site (tubC), which may seed filament formation by the TubZ polymerizing GTPase, stabilizing TubZ filaments. TubR-tubC complexes track the depolymerizing minus end of the filament, probably pulling plasmid within the cell. Required for plasmid replication. Negatively regulates levels of TubZ; its effect on RNA expression has not been shown. Specifically binds iterons, 12-bp imperfect direct repeats that function as a plasmid origin of replication. Four TubR dimers bind to tubC, forming an extended bent DNA-protein filament with protein wrapping helically around the outside of the DNA. The sequence is that of DNA-binding transcriptional repressor TubR from Bacillus thuringiensis subsp. israelensis.